Here is a 216-residue protein sequence, read N- to C-terminus: Ribosome maturation factor RimP (216 aa).

Belongs to the RimP family.

The protein resides in the cytoplasm. Its function is as follows. Required for maturation of 30S ribosomal subunits. The sequence is that of Ribosome maturation factor RimP from Bartonella quintana (strain Toulouse) (Rochalimaea quintana).